We begin with the raw amino-acid sequence, 668 residues long: tRNA 5-methylaminomethyl-2-thiouridine biosynthesis bifunctional protein MnmC (668 aa).

Residues 1-245 are tRNA (mnm(5)s(2)U34)-methyltransferase; that stretch reads MKHYSIQPAN…KREMLCGVME (245 aa). The segment at 270–668 is FAD-dependent cmnm(5)s(2)U34 oxidoreductase; the sequence is IGGGIASALL…LLKGKAVKAG (399 aa).

It in the N-terminal section; belongs to the methyltransferase superfamily. tRNA (mnm(5)s(2)U34)-methyltransferase family. The protein in the C-terminal section; belongs to the DAO family. It depends on FAD as a cofactor.

Its subcellular location is the cytoplasm. The catalysed reaction is 5-aminomethyl-2-thiouridine(34) in tRNA + S-adenosyl-L-methionine = 5-methylaminomethyl-2-thiouridine(34) in tRNA + S-adenosyl-L-homocysteine + H(+). Catalyzes the last two steps in the biosynthesis of 5-methylaminomethyl-2-thiouridine (mnm(5)s(2)U) at the wobble position (U34) in tRNA. Catalyzes the FAD-dependent demodification of cmnm(5)s(2)U34 to nm(5)s(2)U34, followed by the transfer of a methyl group from S-adenosyl-L-methionine to nm(5)s(2)U34, to form mnm(5)s(2)U34. The polypeptide is tRNA 5-methylaminomethyl-2-thiouridine biosynthesis bifunctional protein MnmC (Escherichia coli (strain UTI89 / UPEC)).